We begin with the raw amino-acid sequence, 427 residues long: Gamma-glutamyl phosphate reductase (427 aa).

The protein belongs to the gamma-glutamyl phosphate reductase family.

It localises to the cytoplasm. The catalysed reaction is L-glutamate 5-semialdehyde + phosphate + NADP(+) = L-glutamyl 5-phosphate + NADPH + H(+). It participates in amino-acid biosynthesis; L-proline biosynthesis; L-glutamate 5-semialdehyde from L-glutamate: step 2/2. Catalyzes the NADPH-dependent reduction of L-glutamate 5-phosphate into L-glutamate 5-semialdehyde and phosphate. The product spontaneously undergoes cyclization to form 1-pyrroline-5-carboxylate. The protein is Gamma-glutamyl phosphate reductase of Allorhizobium ampelinum (strain ATCC BAA-846 / DSM 112012 / S4) (Agrobacterium vitis (strain S4)).